Here is a 395-residue protein sequence, read N- to C-terminus: Chaperone protein DnaJ (395 aa).

Residues 4–69 enclose the J domain; sequence DYYEVLGVGR…DKRRRYDQFG (66 aa). The CR-type zinc-finger motif lies at 152-233; the sequence is GVEKTLKIKK…CHGEGIKQGE (82 aa). The Zn(2+) site is built by C165, C168, C181, C184, C207, C210, C221, and C224. CXXCXGXG motif repeat units follow at residues 165–172, 181–188, 207–214, and 221–228; these read CDVCNGTG, CPTCQGTG, CPTCGGEG, and CTACHGEG.

Belongs to the DnaJ family. In terms of assembly, homodimer. It depends on Zn(2+) as a cofactor.

It localises to the cytoplasm. In terms of biological role, participates actively in the response to hyperosmotic and heat shock by preventing the aggregation of stress-denatured proteins and by disaggregating proteins, also in an autonomous, DnaK-independent fashion. Unfolded proteins bind initially to DnaJ; upon interaction with the DnaJ-bound protein, DnaK hydrolyzes its bound ATP, resulting in the formation of a stable complex. GrpE releases ADP from DnaK; ATP binding to DnaK triggers the release of the substrate protein, thus completing the reaction cycle. Several rounds of ATP-dependent interactions between DnaJ, DnaK and GrpE are required for fully efficient folding. Also involved, together with DnaK and GrpE, in the DNA replication of plasmids through activation of initiation proteins. The chain is Chaperone protein DnaJ from Prosthecochloris aestuarii (strain DSM 271 / SK 413).